Here is a 263-residue protein sequence, read N- to C-terminus: Pimeloyl-[acyl-carrier protein] methyl ester esterase (263 aa).

Substrate is bound by residues Trp28, 86–87 (SL), and 149–153 (FLAIQ). The Nucleophile role is filled by Ser86. Catalysis depends on residues Asp213 and His240. His240 contributes to the substrate binding site.

It belongs to the AB hydrolase superfamily. Carboxylesterase BioH family. In terms of assembly, monomer.

It is found in the cytoplasm. It catalyses the reaction 6-carboxyhexanoyl-[ACP] methyl ester + H2O = 6-carboxyhexanoyl-[ACP] + methanol + H(+). The protein operates within cofactor biosynthesis; biotin biosynthesis. Functionally, the physiological role of BioH is to remove the methyl group introduced by BioC when the pimeloyl moiety is complete. It allows to synthesize pimeloyl-ACP via the fatty acid synthetic pathway through the hydrolysis of the ester bonds of pimeloyl-ACP esters. In Shewanella oneidensis (strain ATCC 700550 / JCM 31522 / CIP 106686 / LMG 19005 / NCIMB 14063 / MR-1), this protein is Pimeloyl-[acyl-carrier protein] methyl ester esterase.